Here is a 137-residue protein sequence, read N- to C-terminus: Small ribosomal subunit protein bS6 (137 aa).

The interval 104–137 (SLVNKANNKPEPKPTKAKKEDVAPEAKEQAQTEA) is disordered. The segment covering 111–137 (NKPEPKPTKAKKEDVAPEAKEQAQTEA) has biased composition (basic and acidic residues).

Belongs to the bacterial ribosomal protein bS6 family.

In terms of biological role, binds together with bS18 to 16S ribosomal RNA. The chain is Small ribosomal subunit protein bS6 from Helicobacter hepaticus (strain ATCC 51449 / 3B1).